Reading from the N-terminus, the 238-residue chain is Nicotinamide/nicotinic acid mononucleotide adenylyltransferase (238 aa).

Positions 29 and 30 each coordinate NAD(+). Positions 37 and 70 each coordinate ATP. NAD(+) is bound by residues threonine 107, glycine 136, aspartate 138, tryptophan 149, arginine 168, and asparagine 199. 204 to 205 (SR) is a binding site for ATP.

Belongs to the eukaryotic NMN adenylyltransferase family. A divalent metal cation serves as cofactor.

It localises to the nucleus. The catalysed reaction is beta-nicotinamide D-ribonucleotide + ATP + H(+) = diphosphate + NAD(+). The enzyme catalyses nicotinate beta-D-ribonucleotide + ATP + H(+) = deamido-NAD(+) + diphosphate. It functions in the pathway cofactor biosynthesis; NAD(+) biosynthesis; deamido-NAD(+) from nicotinate D-ribonucleotide: step 1/1. Its pathway is cofactor biosynthesis; NAD(+) biosynthesis; NAD(+) from nicotinamide D-ribonucleotide: step 1/1. Functionally, catalyzes the formation of NAD(+) from nicotinamide mononucleotide (NMN) and ATP. Can also use the deamidated form; nicotinic acid mononucleotide (NaMN) as substrate. The sequence is that of Nicotinamide/nicotinic acid mononucleotide adenylyltransferase (NMNAT) from Arabidopsis thaliana (Mouse-ear cress).